The following is a 139-amino-acid chain: GPI-anchored protein 53 (139 aa).

The first 17 residues, 1–17, serve as a signal peptide directing secretion; that stretch reads MKFQLLTLVSIATTTLA. Composition is skewed to low complexity over residues 57-69 and 77-101; these read TITS…TTTT and TSTT…SSSS. The disordered stretch occupies residues 57-115; the sequence is TITSSSSTTTTTTAKKDKKTTSTTSASSTTTTSTKSNSTSPSSSSSKKHKSETASITKT. A glycan (N-linked (GlcNAc...) asparagine) is linked at Asn93. Gly116 carries the GPI-anchor amidated glycine lipid modification. A propeptide spans 117–139 (removed in mature form); the sequence is GADSVAAAAAVGGPILAALALLL.

The protein resides in the cell membrane. In Candida albicans (strain SC5314 / ATCC MYA-2876) (Yeast), this protein is GPI-anchored protein 53 (PGA53).